Consider the following 215-residue polypeptide: Cytochrome c biogenesis ATP-binding export protein CcmA (215 aa).

The ABC transporter domain occupies 3 to 211 (LTAEILAARR…KMTGFAGVDN (209 aa)). 35-42 (GKNGSGKS) provides a ligand contact to ATP.

It belongs to the ABC transporter superfamily. CcmA exporter (TC 3.A.1.107) family. As to quaternary structure, the complex is composed of two ATP-binding proteins (CcmA) and two transmembrane proteins (CcmB).

The protein localises to the cell inner membrane. It carries out the reaction heme b(in) + ATP + H2O = heme b(out) + ADP + phosphate + H(+). In terms of biological role, part of the ABC transporter complex CcmAB involved in the biogenesis of c-type cytochromes; once thought to export heme, this seems not to be the case, but its exact role is uncertain. Responsible for energy coupling to the transport system. In Rhizobium johnstonii (strain DSM 114642 / LMG 32736 / 3841) (Rhizobium leguminosarum bv. viciae), this protein is Cytochrome c biogenesis ATP-binding export protein CcmA.